Consider the following 490-residue polypeptide: Scarecrow-like transcription factor PAT1 (490 aa).

One can recognise a GRAS domain in the interval 110–490; sequence TLEAISRRDL…RDLVASCAWK (381 aa). A leucine repeat I (LRI) region spans residues 117-178; that stretch reads RDLRADLVSC…AQLASSGSSI (62 aa). Residues 197–262 are VHIID; that stretch reads MHILYEVCPY…GGPPRIRITG (66 aa). A VHIID motif is present at residues 228-232; it reads VHIID. The leucine repeat II (LRII) stretch occupies residues 278 to 310; that stretch reads IVGNRLAKLAKQFNVPFEFNSVSVSVSEVKPKN. The segment at 319–413 is PFYRE; that stretch reads LAVNFAFVLH…QHCLARDVVN (95 aa). An SAW region spans residues 416–490; it reads ACEGADRVER…RDLVASCAWK (75 aa).

It belongs to the GRAS family.

The protein resides in the cytoplasm. Functionally, probable transcription factor involved in phytochrome A (phyA) signal transduction. This chain is Scarecrow-like transcription factor PAT1 (PAT1), found in Arabidopsis thaliana (Mouse-ear cress).